A 736-amino-acid chain; its full sequence is Microtubule-associated protein mu-2 (736 aa).

The protein belongs to the orthoreovirus mu-2 protein family. Interacts with protein mu-NS; in viral inclusions. Interacts with polymerase lambda-3; this interaction stimulates the ATPase activity of mu-2. A divalent metal cation is required as a cofactor.

The protein resides in the virion. It localises to the host cytoplasm. Its subcellular location is the host cytoskeleton. In terms of biological role, minor inner capsid (core) component. Displays NTPase and RNA 5'-triphosphatase (RTPase) activities. ATP is the preferred substrate for hydrolysis. May function as a cofactor of polymerase lambda-3. Associates with microtubules and plays a role in the formation, structural organization and morphology of viral inclusions, where the assembly of cores and the replication of viral RNA occur. Together with mu-NS, recruits the other core proteins to these inclusions. The sequence is that of Microtubule-associated protein mu-2 (M1) from Mammalia (T3D).